We begin with the raw amino-acid sequence, 1407 residues long: DNA-directed RNA polymerase subunit beta' (1407 aa).

Zn(2+) contacts are provided by Cys-70, Cys-72, Cys-85, and Cys-88. The Mg(2+) site is built by Asp-460, Asp-462, and Asp-464. Residues Cys-814, Cys-888, Cys-895, and Cys-898 each coordinate Zn(2+).

Belongs to the RNA polymerase beta' chain family. In terms of assembly, the RNAP catalytic core consists of 2 alpha, 1 beta, 1 beta' and 1 omega subunit. When a sigma factor is associated with the core the holoenzyme is formed, which can initiate transcription. The cofactor is Mg(2+). Zn(2+) serves as cofactor.

The catalysed reaction is RNA(n) + a ribonucleoside 5'-triphosphate = RNA(n+1) + diphosphate. DNA-dependent RNA polymerase catalyzes the transcription of DNA into RNA using the four ribonucleoside triphosphates as substrates. This Cellvibrio japonicus (strain Ueda107) (Pseudomonas fluorescens subsp. cellulosa) protein is DNA-directed RNA polymerase subunit beta'.